A 395-amino-acid chain; its full sequence is Lipid-A-disaccharide synthase (395 aa).

It belongs to the LpxB family.

It carries out the reaction a lipid X + a UDP-2-N,3-O-bis[(3R)-3-hydroxyacyl]-alpha-D-glucosamine = a lipid A disaccharide + UDP + H(+). Its pathway is bacterial outer membrane biogenesis; LPS lipid A biosynthesis. Its function is as follows. Condensation of UDP-2,3-diacylglucosamine and 2,3-diacylglucosamine-1-phosphate to form lipid A disaccharide, a precursor of lipid A, a phosphorylated glycolipid that anchors the lipopolysaccharide to the outer membrane of the cell. The protein is Lipid-A-disaccharide synthase of Bordetella avium (strain 197N).